A 56-amino-acid polypeptide reads, in one-letter code: uncharacterized protein (56 aa).

Belongs to the archaeal ATPase family.

This is an uncharacterized protein from Methanocaldococcus jannaschii (strain ATCC 43067 / DSM 2661 / JAL-1 / JCM 10045 / NBRC 100440) (Methanococcus jannaschii).